The sequence spans 621 residues: Chaperone protein DnaK (621 aa).

Position 179 is a phosphothreonine; by autocatalysis (threonine 179). A compositionally biased stretch (polar residues) spans 583-605 (SQVQDTQGAAQGQSQGNPQQTAD). The interval 583–621 (SQVQDTQGAAQGQSQGNPQQTADNRGKVVDAEIVDENKE) is disordered. Residues 606–621 (NRGKVVDAEIVDENKE) show a composition bias toward basic and acidic residues.

It belongs to the heat shock protein 70 family.

Its function is as follows. Acts as a chaperone. In Endomicrobium trichonymphae, this protein is Chaperone protein DnaK.